Reading from the N-terminus, the 397-residue chain is Arginine biosynthesis bifunctional protein ArgJ (397 aa).

Substrate-binding residues include Thr143, Lys169, Thr180, Glu266, Asn392, and Thr397. Thr180 serves as the catalytic Nucleophile.

Belongs to the ArgJ family. Heterotetramer of two alpha and two beta chains.

The protein localises to the cytoplasm. It catalyses the reaction N(2)-acetyl-L-ornithine + L-glutamate = N-acetyl-L-glutamate + L-ornithine. It carries out the reaction L-glutamate + acetyl-CoA = N-acetyl-L-glutamate + CoA + H(+). Its pathway is amino-acid biosynthesis; L-arginine biosynthesis; L-ornithine and N-acetyl-L-glutamate from L-glutamate and N(2)-acetyl-L-ornithine (cyclic): step 1/1. The protein operates within amino-acid biosynthesis; L-arginine biosynthesis; N(2)-acetyl-L-ornithine from L-glutamate: step 1/4. With respect to regulation, competitively inhibited by L-ornithine. Catalyzes two activities which are involved in the cyclic version of arginine biosynthesis: the synthesis of N-acetylglutamate from glutamate and acetyl-CoA as the acetyl donor, and of ornithine by transacetylation between N(2)-acetylornithine and glutamate. The chain is Arginine biosynthesis bifunctional protein ArgJ from Thermotoga neapolitana (strain ATCC 49049 / DSM 4359 / NBRC 107923 / NS-E).